A 249-amino-acid polypeptide reads, in one-letter code: Type III pantothenate kinase (249 aa).

Position 6–13 (6–13 (DCGNSFIK)) interacts with ATP. Residues Tyr93 and 100–103 (GMDR) contribute to the substrate site. The Proton acceptor role is filled by Asp102. Asp122 lines the K(+) pocket. Residue Thr125 participates in ATP binding. Thr181 is a substrate binding site.

The protein belongs to the type III pantothenate kinase family. Homodimer. Requires NH4(+) as cofactor. K(+) is required as a cofactor.

It localises to the cytoplasm. It catalyses the reaction (R)-pantothenate + ATP = (R)-4'-phosphopantothenate + ADP + H(+). Its pathway is cofactor biosynthesis; coenzyme A biosynthesis; CoA from (R)-pantothenate: step 1/5. Functionally, catalyzes the phosphorylation of pantothenate (Pan), the first step in CoA biosynthesis. This Pseudomonas putida (strain ATCC 700007 / DSM 6899 / JCM 31910 / BCRC 17059 / LMG 24140 / F1) protein is Type III pantothenate kinase.